The sequence spans 728 residues: Polyribonucleotide nucleotidyltransferase (728 aa).

Asp488 and Asp494 together coordinate Mg(2+). Residues 555 to 614 (PRMITMKIHPDKIREVIGKGGSTIQALTKETGTTIDIQEDGTITIASTSTDGMAEAKRRI) form the KH domain. Residues 624-692 (GKIYNGTVLK…EKGRLRLSLK (69 aa)) enclose the S1 motif domain. Residues 702–728 (ISPVNAGEAAPAPAPAAAPATPSDQQQ) form a disordered region. A compositionally biased stretch (low complexity) spans 710–721 (AAPAPAPAAAPA).

Belongs to the polyribonucleotide nucleotidyltransferase family. Requires Mg(2+) as cofactor.

It is found in the cytoplasm. It catalyses the reaction RNA(n+1) + phosphate = RNA(n) + a ribonucleoside 5'-diphosphate. In terms of biological role, involved in mRNA degradation. Catalyzes the phosphorolysis of single-stranded polyribonucleotides processively in the 3'- to 5'-direction. This is Polyribonucleotide nucleotidyltransferase from Cupriavidus pinatubonensis (strain JMP 134 / LMG 1197) (Cupriavidus necator (strain JMP 134)).